We begin with the raw amino-acid sequence, 393 residues long: Mitogen-activated protein kinase SIPK (393 aa).

Residues 1–11 (MDGSGQQTDTM) show a composition bias toward polar residues. A disordered region spans residues 1 to 31 (MDGSGQQTDTMMSDAGAEQPPPAPQPVAGMD). Residues 60 to 345 (KPPILPIGKG…VEGALAHPYL (286 aa)) form the Protein kinase domain. ATP-binding positions include 66–74 (IGKGAYGIV) and K89. D186 functions as the Proton acceptor in the catalytic mechanism. The TXY motif lies at 218–220 (TEY).

The protein belongs to the protein kinase superfamily. CMGC Ser/Thr protein kinase family. MAP kinase subfamily. As to quaternary structure, interacts with SIPKK.

The catalysed reaction is L-tyrosyl-[protein] + ATP = O-phospho-L-tyrosyl-[protein] + ADP + H(+). It carries out the reaction L-seryl-[protein] + ATP = O-phospho-L-seryl-[protein] + ADP + H(+). It catalyses the reaction L-threonyl-[protein] + ATP = O-phospho-L-threonyl-[protein] + ADP + H(+). Activated by threonine and tyrosine phosphorylation. Its function is as follows. Phosphorylates myelin basic protein (MBP) in vitro. May be involved in disease resistance. This Nicotiana tabacum (Common tobacco) protein is Mitogen-activated protein kinase SIPK.